A 268-amino-acid chain; its full sequence is Undecaprenyl-diphosphatase (268 aa).

The next 7 membrane-spanning stretches (helical) occupy residues 41–61 (LAYSLGLFLEAASVLAALIYF), 81–101 (WLTYVIVTTAATGAVGIPLYM), 106–126 (YLLLGASAGWLMVVLGVAVIF), 146–166 (MTLGHMALVGLAQALSVLPGI), 191–211 (FVLVPIAGLGATALAYLSEGG), 213–233 (VATPEVITAMLIGLVVSLVTI), and 245–265 (VTLVNIVVGTLAIAGGITRIL).

This sequence belongs to the UppP family.

Its subcellular location is the cell membrane. The enzyme catalyses di-trans,octa-cis-undecaprenyl diphosphate + H2O = di-trans,octa-cis-undecaprenyl phosphate + phosphate + H(+). Catalyzes the dephosphorylation of undecaprenyl diphosphate (UPP). The protein is Undecaprenyl-diphosphatase of Pyrobaculum islandicum (strain DSM 4184 / JCM 9189 / GEO3).